A 758-amino-acid polypeptide reads, in one-letter code: Protein SPT21 (758 aa).

Disordered regions lie at residues asparagine 251–alanine 271, isoleucine 372–arginine 414, glycine 438–serine 471, and valine 624–asparagine 651. Positions valine 395–serine 408 are enriched in low complexity. Serine 454 carries the post-translational modification Phosphoserine. Residues aspartate 626–asparagine 651 show a composition bias toward polar residues.

Required for normal transcription at a number of loci in yeast. This is Protein SPT21 (SPT21) from Saccharomyces cerevisiae (strain ATCC 204508 / S288c) (Baker's yeast).